Reading from the N-terminus, the 407-residue chain is Phosphonoacetate hydrolase (407 aa).

Positions 25, 64, 202, 206, 241, 242, and 368 each coordinate Zn(2+). 2 residues coordinate substrate: T64 and D202. H242 and H368 together coordinate substrate.

This sequence belongs to the alkaline phosphatase family. PhnA subfamily. In terms of assembly, homodimer. Requires Zn(2+) as cofactor.

The catalysed reaction is phosphonoacetate + H2O = acetate + phosphate + H(+). Functionally, specifically hydrolyzes phosphonoacetate. Does not have activity on other organophosphonates or acetates. This chain is Phosphonoacetate hydrolase, found in Pseudomonas putida (Arthrobacter siderocapsulatus).